We begin with the raw amino-acid sequence, 377 residues long: Caspase-4 (377 aa).

The interval 1 to 59 is required for LPS-binding; that stretch reads MAEDKHNKNPLKMLESLGKELISGLLDDFVEKNVLKLEEEEKKKIYDAKLQDKARVLVD. A propeptide spanning residues 1 to 80 is cleaved from the precursor; sequence MAEDKHNKNP…VFVQTFLNID (80 aa). The 91-residue stretch at 1 to 91 folds into the CARD domain; the sequence is MAEDKHNKNP…NSTSIKAPEE (91 aa). The residue at position 83 (serine 83) is a Phosphoserine. Residues histidine 210 and cysteine 258 contribute to the active site. Positions 271–289 are excised as a propeptide; the sequence is SPPALADSFSQSSENLEED.

It belongs to the peptidase C14A family. In terms of assembly, heterotetramer that consists of two anti-parallel arranged heterodimers, each one formed by a 20 kDa (Caspase-4 subunit p20) and a 10 kDa (Caspase-4 subunit p10) subunit. Upon direct LPS-binding, forms large homooligomers, resulting in its activation. These oligomers are often referred to as 'non-canonical inflammasomes'. In its precursor form, interacts with TMEM214; this interaction is required for association with the endoplasmic reticulum membrane. Interacts with CASP1. Interacts with NOD2. Interacts with Serpinb1a, Serpinb1b and Serpinb1c; these interactions regulate CASP4 activity. As to quaternary structure, heterotetramer that consists of two anti-parallel arranged heterodimers, each one formed by a 20 kDa (Caspase-4 subunit p20) and a 10 kDa (Caspase-4 subunit p10) subunit. In response to activation signals, undergoes autoproteolytic cleavage and activation.

The protein resides in the cytoplasm. It is found in the cytosol. Its subcellular location is the endoplasmic reticulum membrane. It localises to the mitochondrion. The protein localises to the inflammasome. The protein resides in the secreted. The catalysed reaction is Strict requirement for Asp at the P1 position. It has a preferred cleavage sequence of Tyr-Val-Ala-Asp-|- but also cleaves at Asp-Glu-Val-Asp-|-.. Its activity is regulated as follows. Activated by homooligomerization induced by direct binding to cytosolic LPS, in a TLR4-independent manner. In addition to LPS, CASP4/CASP11 may also be activated by oxidized phospholipid 1-palmitoyl-2-arachidonoyl- sn-glycero-3-phosphorylcholine, an oxidized phospholipid (oxPAPC), in dendritic cells, promoting adaptive immunity. The role of oxPAPC is however unclear and another report suggests that oxPAPC competes with LPS-binding and inhibits the non-canonical inflammasome in macrophages. Its function is as follows. Inflammatory caspase that acts as the effector of the non-canonical inflammasome by mediating lipopolysaccharide (LPS)-induced pyroptosis. Also indirectly activates the NLRP3 and NLRP6 inflammasomes. Acts as a thiol protease that cleaves a tetrapeptide after an Asp residue at position P1: catalyzes cleavage of CGAS, GSDMD and IL18. Effector of the non-canonical inflammasome independently of NLRP3 inflammasome and CASP1: the non-canonical inflammasome promotes pyroptosis through GSDMD cleavage without involving secretion of cytokine IL1B. In the non-canonical inflammasome, CASP4 is activated by direct binding to the lipid A moiety of LPS without the need of an upstream sensor. LPS-binding promotes CASP4 activation and CASP4-mediated cleavage of GSDMD and IL18, followed by IL18 secretion through the GSDMD pore, pyroptosis of infected cells and their extrusion into the gut lumen. Also indirectly promotes secretion of mature cytokines (IL1A and HMGB1) downstream of GSDMD-mediated pyroptosis via activation of the NLRP3 and NLRP6 inflammasomes. Involved in NLRP3-dependent CASP1 activation and IL1B secretion in response to non-canonical activators, such as UVB radiation or cholera enterotoxin. Involved in NLRP6 inflammasome-dependent activation in response to lipoteichoic acid (LTA), a cell-wall component of Gram-positive bacteria, which leads to CASP1 activation and IL1B secretion. Involved in LPS-induced IL6 secretion; this activity may not require caspase enzymatic activity. The non-canonical inflammasome is required for innate immunity to cytosolic, but not vacuolar, bacteria. Plays a crucial role in the restriction of S.typhimurium replication in colonic epithelial cells during infection. Pyroptosis limits bacterial replication, while cytokine secretion promotes the recruitment and activation of immune cells and triggers mucosal inflammation. May also act as an activator of adaptive immunity in dendritic cells, following activation by oxidized phospholipid 1-palmitoyl-2-arachidonoyl- sn-glycero-3-phosphorylcholine, an oxidized phospholipid (oxPAPC). Cleavage of GSDMD is not strictly dependent on the consensus cleavage site but depends on an exosite interface on CASP4 that recognizes and binds the Gasdermin-D, C-terminal (GSDMD-CT) part. Catalyzes cleavage and maturation of IL18; IL18 processing also depends of the exosite interface on CASP4. In contrast, it does not directly process IL1B. During non-canonical inflammasome activation, cuts CGAS and may play a role in the regulation of antiviral innate immune activation. The chain is Caspase-4 (CASP4) from Bos taurus (Bovine).